A 729-amino-acid chain; its full sequence is Fatty acid oxidation complex subunit alpha (729 aa).

An enoyl-CoA hydratase/isomerase region spans residues 1–189 (MLYKGDTLYL…KIGLVDGVVK (189 aa)). Aspartate 296 contributes to the substrate binding site. The interval 311-729 (ETPKQAAVLG…ARPVGSLKTA (419 aa)) is 3-hydroxyacyl-CoA dehydrogenase. NAD(+) is bound by residues methionine 324, aspartate 343, 400–402 (VVE), lysine 407, and serine 429. The active-site For 3-hydroxyacyl-CoA dehydrogenase activity is histidine 450. Asparagine 453 serves as a coordination point for NAD(+). Substrate is bound by residues asparagine 500 and tyrosine 660. Residues 708-729 (RHNEPYYPPVEPARPVGSLKTA) form a disordered region.

It in the N-terminal section; belongs to the enoyl-CoA hydratase/isomerase family. This sequence in the C-terminal section; belongs to the 3-hydroxyacyl-CoA dehydrogenase family. Heterotetramer of two alpha chains (FadB) and two beta chains (FadA).

The enzyme catalyses a (3S)-3-hydroxyacyl-CoA + NAD(+) = a 3-oxoacyl-CoA + NADH + H(+). The catalysed reaction is a (3S)-3-hydroxyacyl-CoA = a (2E)-enoyl-CoA + H2O. It catalyses the reaction a 4-saturated-(3S)-3-hydroxyacyl-CoA = a (3E)-enoyl-CoA + H2O. It carries out the reaction (3S)-3-hydroxybutanoyl-CoA = (3R)-3-hydroxybutanoyl-CoA. The enzyme catalyses a (3Z)-enoyl-CoA = a 4-saturated (2E)-enoyl-CoA. The catalysed reaction is a (3E)-enoyl-CoA = a 4-saturated (2E)-enoyl-CoA. It participates in lipid metabolism; fatty acid beta-oxidation. Involved in the aerobic and anaerobic degradation of long-chain fatty acids via beta-oxidation cycle. Catalyzes the formation of 3-oxoacyl-CoA from enoyl-CoA via L-3-hydroxyacyl-CoA. It can also use D-3-hydroxyacyl-CoA and cis-3-enoyl-CoA as substrate. The sequence is that of Fatty acid oxidation complex subunit alpha from Salmonella gallinarum (strain 287/91 / NCTC 13346).